Here is a 414-residue protein sequence, read N- to C-terminus: Putative competence-damage inducible protein (414 aa).

Belongs to the CinA family.

This chain is Putative competence-damage inducible protein, found in Listeria monocytogenes serotype 4b (strain CLIP80459).